An 897-amino-acid polypeptide reads, in one-letter code: MARTLPSQYDPFDAEPRWQRFWEEHRFFSPAADGPGKPFSLVLPPPNVTGSLHMGHALCFTLPDVVVRYRRMKGFKTLWLPGTDHASIAVHTVLEKQLRQEGKTRFDLGREAFLERAWAWKERSQDTIRGQLRRLGLSLDWTRESFTLDEKRNRAVVKVFVDLHRKGLIYRGKYLVNWCPASQTAVSDLEVDDKEEKGHLWQLRYPVADSDEFLVVATTRPETMLGDTGVAVHPEDPRYKHLIGREAELPILGRRIVIVGDEAVDREFGTGAVKVTPAHDPNDFEIGKRHGLPMINLLNPNGTYNENAGPYAGLDRFVVRKQVVARAAAEGWLVGIEDHVHNVPYSERGGVPIEPYLSDQWFLDVSGMATRVLEAFDSQNQPAFVPERWGKVYRDWLVRIRPWNISRQLWWGHRIPAWFVAGSEGEYVVAHDEAEAFAVARERYGPDVQLQRDQDVLDTWFSSSLWPFTTLGWPDQTEDLGVFYPNALMSTGFDIIFFWVARMAMMAGEFTGQIPFETVYINGLVRDEKGQKMSKTKGNGIDPIEMMDKYGTDALRYTLVREVTGAGQDVRFDYNRKTGESGAVDASKRFANKIWNASRFVLMNLDELTPAALGAADPGSLTLEDRWILGRLGQTARQIDELLGRYALGEAARSLYEFIWDDFCDWYVELAKPRLEALETRRGAQQVLAAVLDRTLRLLHPWMPHLSEEIWQLLHQPLEVASICVQPFPTGTDLPAEPPAEFALMQQIVRTIRNLRAFAQVPPLRTLPAVRLASRNAEERAAIDATRQAIAHLGRVEQLPLEEVADEHLKQVAVGVAGTVQVMLPLGGLVDVAALAGKLRRSLEKLDKESGVLAARLDNASYLANAPAELVTESRAKLAEQRAQAAILAEQLARLEN.

Residues 46-56 (PNVTGSLHMGH) carry the 'HIGH' region motif. The 'KMSKS' region motif lies at 532–536 (KMSKT). Residue Lys535 coordinates ATP. A coiled-coil region spans residues 839 to 897 (LRRSLEKLDKESGVLAARLDNASYLANAPAELVTESRAKLAEQRAQAAILAEQLARLEN).

Belongs to the class-I aminoacyl-tRNA synthetase family. ValS type 1 subfamily. In terms of assembly, monomer.

It is found in the cytoplasm. It carries out the reaction tRNA(Val) + L-valine + ATP = L-valyl-tRNA(Val) + AMP + diphosphate. Its function is as follows. Catalyzes the attachment of valine to tRNA(Val). As ValRS can inadvertently accommodate and process structurally similar amino acids such as threonine, to avoid such errors, it has a 'posttransfer' editing activity that hydrolyzes mischarged Thr-tRNA(Val) in a tRNA-dependent manner. The polypeptide is Valine--tRNA ligase (Gloeobacter violaceus (strain ATCC 29082 / PCC 7421)).